A 602-amino-acid polypeptide reads, in one-letter code: Ligand-dependent nuclear receptor corepressor-like protein (602 aa).

Residues 104 to 124 (PSLDSSQSTPTEELSSQGQSN) form a disordered region. Residues 106-124 (LDSSQSTPTEELSSQGQSN) are compositionally biased toward polar residues. Residues Lys-242, Lys-319, Lys-340, and Lys-397 each participate in a glycyl lysine isopeptide (Lys-Gly) (interchain with G-Cter in SUMO2) cross-link. 2 disordered regions span residues 495 to 521 (TVDGTSENTEDGLDRKDSKQPRKKRGR) and 564 to 602 (ERSGTLKTPPKKKLRLPDTGLYNMTDSGTGSCKNSSKPV). Residues 516 to 568 (RKKRGRYRQYDHEIMEEAIAMVMSGKMSVSKAQGIYGVPHSTLEYKVKERSGT) enclose the HTH psq-type domain. The segment at residues 544-564 (VSKAQGIYGVPHSTLEYKVKE) is a DNA-binding region (H-T-H motif). Over residues 585–602 (YNMTDSGTGSCKNSSKPV) the composition is skewed to polar residues.

Its subcellular location is the nucleus. Its function is as follows. May act as transcription activator that binds DNA elements with the sequence 5'-CCCTATCGATCGATCTCTACCT-3'. May play a role in spermatogenesis. This is Ligand-dependent nuclear receptor corepressor-like protein (LCORL) from Homo sapiens (Human).